We begin with the raw amino-acid sequence, 130 residues long: Small ribosomal subunit protein uS11 (130 aa).

Belongs to the universal ribosomal protein uS11 family. In terms of assembly, part of the 30S ribosomal subunit. Interacts with proteins S7 and S18. Binds to IF-3.

In terms of biological role, located on the platform of the 30S subunit, it bridges several disparate RNA helices of the 16S rRNA. Forms part of the Shine-Dalgarno cleft in the 70S ribosome. In Syntrophomonas wolfei subsp. wolfei (strain DSM 2245B / Goettingen), this protein is Small ribosomal subunit protein uS11.